The chain runs to 236 residues: Small ribosomal subunit protein uS2c (236 aa).

The protein belongs to the universal ribosomal protein uS2 family.

Its subcellular location is the plastid. It localises to the chloroplast. The chain is Small ribosomal subunit protein uS2c (rps2) from Lepidium virginicum (Virginia pepperweed).